The following is a 422-amino-acid chain: Hispidin-3-hydroxylase (422 aa).

Residues 6-26 form a helical membrane-spanning segment; sequence NSLSVLIVGAGLGGLAAAIAL. The FAD site is built by alanine 50, arginine 108, and aspartate 318.

Belongs to the paxM FAD-dependent monooxygenase family. In terms of assembly, monomer. The cofactor is FAD.

The protein localises to the membrane. The enzyme catalyses hispidin + NADH + O2 + H(+) = 3-hydroxyhispidin + NAD(+) + H2O. It carries out the reaction hispidin + NADPH + O2 + H(+) = 3-hydroxyhispidin + NADP(+) + H2O. It participates in secondary metabolite biosynthesis. In terms of biological role, hispidin-3-hydroxylase; part of the gene cluster that mediates the fungal bioluminescence cycle. Hydroxylates hispidin in order to produce the fungal luciferin 3-hydroxyhispidin. The fungal bioluminescence cycle begins with the hispidin synthetase that catalyzes the formation of hispidin which is further hydroxylated by the hispidin-3-hydroxylase, yielding the fungal luciferin 3-hydroxyhispidin. The luciferase then produces an endoperoxide as a high-energy intermediate with decomposition that yields oxyluciferin (also known as caffeoylpyruvate) and light emission. Oxyluciferin can be recycled to caffeic acid by caffeoylpyruvate hydrolase. This is Hispidin-3-hydroxylase from Neonothopanus nambi (Agaricus nambi).